A 193-amino-acid polypeptide reads, in one-letter code: Small ribosomal subunit protein eS7 (193 aa).

This sequence belongs to the eukaryotic ribosomal protein eS7 family.

The chain is Small ribosomal subunit protein eS7 (rps7) from Dictyostelium discoideum (Social amoeba).